The sequence spans 122 residues: Large ribosomal subunit protein uL14c (122 aa).

The protein belongs to the universal ribosomal protein uL14 family. Part of the 50S ribosomal subunit.

The protein resides in the plastid. Its subcellular location is the chloroplast. Functionally, binds to 23S rRNA. The chain is Large ribosomal subunit protein uL14c from Gracilaria tenuistipitata var. liui (Red alga).